A 399-amino-acid polypeptide reads, in one-letter code: Exodeoxyribonuclease 7 large subunit (399 aa).

The protein belongs to the XseA family. In terms of assembly, heterooligomer composed of large and small subunits.

It localises to the cytoplasm. It catalyses the reaction Exonucleolytic cleavage in either 5'- to 3'- or 3'- to 5'-direction to yield nucleoside 5'-phosphates.. Bidirectionally degrades single-stranded DNA into large acid-insoluble oligonucleotides, which are then degraded further into small acid-soluble oligonucleotides. The protein is Exodeoxyribonuclease 7 large subunit of Clostridium botulinum (strain Eklund 17B / Type B).